Here is a 329-residue protein sequence, read N- to C-terminus: DNA-directed RNA polymerase subunit alpha (329 aa).

Residues 1 to 234 (MQGSVTEFLK…EQLDAFVELR (234 aa)) form an alpha N-terminal domain (alpha-NTD) region. The interval 248–329 (FDPILLRPVD…WPPASLIDND (82 aa)) is alpha C-terminal domain (alpha-CTD).

It belongs to the RNA polymerase alpha chain family. As to quaternary structure, homodimer. The RNAP catalytic core consists of 2 alpha, 1 beta, 1 beta' and 1 omega subunit. When a sigma factor is associated with the core the holoenzyme is formed, which can initiate transcription.

The catalysed reaction is RNA(n) + a ribonucleoside 5'-triphosphate = RNA(n+1) + diphosphate. Its function is as follows. DNA-dependent RNA polymerase catalyzes the transcription of DNA into RNA using the four ribonucleoside triphosphates as substrates. The chain is DNA-directed RNA polymerase subunit alpha from Idiomarina loihiensis (strain ATCC BAA-735 / DSM 15497 / L2-TR).